Consider the following 367-residue polypeptide: BTB/POZ domain-containing protein Tiwaz (367 aa).

2 disordered regions span residues 16–46 (LTVDSSCPKRKKCDMDRERERDVKALEPRDL) and 62–87 (SSPTVSPTISNSSSPTPTPPASSSVT). Residues 28–45 (CDMDRERERDVKALEPRD) show a composition bias toward basic and acidic residues. One can recognise a BTB domain in the interval 135–205 (APVHIDVGGT…MRNSRLLIAE (71 aa)). The tract at residues 240–261 (GNYLVAPPTPPARHIKTSPRTS) is disordered.

In terms of biological role, functions with the transcription factor TfAP-2 to regulate octopamine neuronal signaling pathways that control behaviors such as male aggression, male mating, and the initiation of feeding. Required for TfAP-2 transcriptional activity in octopaminergic neurons. Functions with TfAP-2 to regulate expression of genes which are involved in promoting octopamine production and secretion from octopaminergic neurons, such as Tbh and Vmat. Octopamine then modulates feeding and male aggression by regulating the expression of the satiation hormone Dsk in insulin-producing cells (IPCs). Functions with octopamine and Dsk as part of a negative feedback loop to prevent overeating; acts with TfAP-2 to regulate octopamine signaling pathways that initiate feeding, then octopamine activates expression of Dsk which inhibits consummatory behavior. May also be involved in negatively regulating nociception in larvae to prevent spontaneous pain and hyperalgesia. In Drosophila melanogaster (Fruit fly), this protein is BTB/POZ domain-containing protein Tiwaz.